The sequence spans 462 residues: EPD1-interacting receptor-like cytoplasmic serine/threonine-protein kinase 5A (462 aa).

The 282-residue stretch at 85–366 (FSSANFLGEG…DVVNILEPLL (282 aa)) folds into the Protein kinase domain. Residues 91–99 (LGEGGFGPV) and lysine 120 contribute to the ATP site. 2 positions are modified to phosphotyrosine: tyrosine 165 and tyrosine 167. Aspartate 215 functions as the Proton acceptor in the catalytic mechanism.

Belongs to the protein kinase superfamily. Ser/Thr protein kinase family. As to quaternary structure, interacts with the Verticillium dahliae elicitor EPD1 (AC G2WWH6). In terms of processing, phosphorylated at Tyr-165 and Tyr-167 in the presence of pathogen-associated molecular patterns (PAMPs); this triggers the expression of pathogenesis-related genes (e.g. PR5 and PR16). In terms of tissue distribution, mostly expressed in roots and, to a lesser extent, in leaves.

It is found in the cell membrane. It catalyses the reaction L-seryl-[protein] + ATP = O-phospho-L-seryl-[protein] + ADP + H(+). The catalysed reaction is L-threonyl-[protein] + ATP = O-phospho-L-threonyl-[protein] + ADP + H(+). Required for pathogen-associated molecular pattern (PAMP, e.g. chitin and flg22)-triggered immunity (PTI) involving reactive oxygen species (ROS) accumulation and triggering plant defense, including defense-related gene expression (e.g. PR1 and LOX). Ensures specific recognition of the EPD1 effector of Verticillium dahliae, resulting in a hypersensitive response known as effector-triggered immunity (ETI), characterized by the activation of programmed cell death to limit infection by the pathogen. Priming plants with the incompatible pathogen V.dahliae leads to an increased resistance to compatible pathogens, as a result of systemic acquired resistance (SAR). This is EPD1-interacting receptor-like cytoplasmic serine/threonine-protein kinase 5A from Gossypium barbadense (Sea Island cotton).